A 64-amino-acid chain; its full sequence is Conotoxin Pn-B01121 (64 aa).

The N-terminal stretch at 1–22 (MCCLPVFVILLLLIASAPSVDA) is a signal peptide. The propeptide occupies 23 to 48 (LPKTKDDMSLASFHDNAKRTLQILSN). Position 63 is a tryptophan amide (Trp-63).

The protein belongs to the conotoxin T superfamily. Post-translationally, contains 2 disulfide bonds that can be either 'C1-C3, C2-C4' or 'C1-C4, C2-C3', since these disulfide connectivities have been observed for conotoxins with cysteine framework V (for examples, see AC P0DQQ7 and AC P81755). Expressed by the venom duct.

The protein resides in the secreted. In Conus pennaceus (Feathered cone), this protein is Conotoxin Pn-B01121.